Here is a 213-residue protein sequence, read N- to C-terminus: Probable nicotinate-nucleotide adenylyltransferase (213 aa).

It belongs to the NadD family.

It carries out the reaction nicotinate beta-D-ribonucleotide + ATP + H(+) = deamido-NAD(+) + diphosphate. It functions in the pathway cofactor biosynthesis; NAD(+) biosynthesis; deamido-NAD(+) from nicotinate D-ribonucleotide: step 1/1. Its function is as follows. Catalyzes the reversible adenylation of nicotinate mononucleotide (NaMN) to nicotinic acid adenine dinucleotide (NaAD). In Pectobacterium atrosepticum (strain SCRI 1043 / ATCC BAA-672) (Erwinia carotovora subsp. atroseptica), this protein is Probable nicotinate-nucleotide adenylyltransferase.